The chain runs to 102 residues: Small ribosomal subunit protein uS10 (102 aa).

It belongs to the universal ribosomal protein uS10 family. In terms of assembly, part of the 30S ribosomal subunit.

Its function is as follows. Involved in the binding of tRNA to the ribosomes. The protein is Small ribosomal subunit protein uS10 of Agrobacterium fabrum (strain C58 / ATCC 33970) (Agrobacterium tumefaciens (strain C58)).